Reading from the N-terminus, the 201-residue chain is Ras-related protein Rab-9A (201 aa).

A2 is modified (N-acetylalanine). G17, V18, G19, K20, S21, S22, S34, H38, and T39 together coordinate GTP. Residue S21 coordinates Mg(2+). Positions 31–42 (KFDSQLFHTIGV) match the Switch 1 motif. Phosphoserine is present on S34. Mg(2+) contacts are provided by T39 and D62. Residues 64 to 78 (AGQERFRSLRTPFYR) carry the Switch 2 motif. Positions 65, 124, 125, 127, and 156 each coordinate GTP. Residue S179 is modified to Phosphoserine. T187 carries the post-translational modification Phosphothreonine. 2 S-geranylgeranyl cysteine lipidation sites follow: C200 and C201.

The protein belongs to the small GTPase superfamily. Rab family. Interacts (preferentially in its GTP-bound form) with GCC2 (via its GRIP domain). Interacts (GTP-bound form) with SGSM1; the GDP-bound form has much lower affinity for SGSM1. Interacts with SGSM2. The GTP-bound form but not the GDP-bound form interacts with HPS4 and the BLOC-3 complex (heterodimer of HPS1 and HPS4) but does not interact with HPS1 alone. Interacts (GTP-bound form) with NDE1; two RAB9A-GTP molecules lie on the opposite sides of the NDE1 homodimer; the interaction leads to RAB9A-dynein motor tethering. Interacts (GTP-bound form) with NDEL1. Requires Mg(2+) as cofactor.

The protein resides in the cell membrane. It localises to the endoplasmic reticulum membrane. The protein localises to the golgi apparatus membrane. Its subcellular location is the late endosome. It is found in the cytoplasmic vesicle. The protein resides in the phagosome membrane. It localises to the phagosome. The protein localises to the cytoplasmic vesicle membrane. Its subcellular location is the melanosome. The enzyme catalyses GTP + H2O = GDP + phosphate + H(+). Its activity is regulated as follows. Regulated by guanine nucleotide exchange factors (GEFs) which promote the exchange of bound GDP for free GTP. Regulated by GTPase activating proteins (GAPs) which increase the GTP hydrolysis activity. Inhibited by GDP dissociation inhibitors (GDIs). Its function is as follows. The small GTPases Rab are key regulators of intracellular membrane trafficking, from the formation of transport vesicles to their fusion with membranes. Rabs cycle between an inactive GDP-bound form and an active GTP-bound form that is able to recruit to membranes different sets of downstream effectors directly responsible for vesicle formation, movement, tethering and fusion. RAB9A is involved in the transport of proteins between the endosomes and the trans-Golgi network (TGN). Specifically uses NDE1/NDEL1 as an effector to interact with the dynein motor complex in order to control retrograde trafficking of RAB9-associated late endosomes to the TGN. Involved in the recruitment of SGSM2 to melanosomes and is required for the proper trafficking of melanogenic enzymes TYR, TYRP1 and DCT/TYRP2 to melanosomes in melanocytes. The sequence is that of Ras-related protein Rab-9A from Rattus norvegicus (Rat).